A 162-amino-acid polypeptide reads, in one-letter code: Transcriptional repressor NrdR (162 aa).

The segment at 3–34 is a zinc-finger region; it reads CPFCQFEGLKVTDSRDAMEMNAIRRRRECLNC. Positions 48 to 138 constitute an ATP-cone domain; that stretch reads VQVQKRDGTY…VYKRFKDLGE (91 aa).

This sequence belongs to the NrdR family. The cofactor is Zn(2+).

Functionally, negatively regulates transcription of bacterial ribonucleotide reductase nrd genes and operons by binding to NrdR-boxes. The sequence is that of Transcriptional repressor NrdR from Protochlamydia amoebophila (strain UWE25).